The primary structure comprises 191 residues: Elongation factor P (191 aa).

Position 34 is an N6-(3,6-diaminohexanoyl)-5-hydroxylysine (K34).

Belongs to the elongation factor P family. May be beta-lysylated on the epsilon-amino group of Lys-34 by the combined action of EpmA and EpmB, and then hydroxylated on the C5 position of the same residue by EpmC (if this protein is present). Lysylation is critical for the stimulatory effect of EF-P on peptide-bond formation. The lysylation moiety may extend toward the peptidyltransferase center and stabilize the terminal 3-CCA end of the tRNA. Hydroxylation of the C5 position on Lys-34 may allow additional potential stabilizing hydrogen-bond interactions with the P-tRNA.

The protein localises to the cytoplasm. It participates in protein biosynthesis; polypeptide chain elongation. Functionally, involved in peptide bond synthesis. Alleviates ribosome stalling that occurs when 3 or more consecutive Pro residues or the sequence PPG is present in a protein, possibly by augmenting the peptidyl transferase activity of the ribosome. Modification of Lys-34 is required for alleviation. The polypeptide is Elongation factor P (Marinomonas sp. (strain MWYL1)).